Here is a 253-residue protein sequence, read N- to C-terminus: Triosephosphate isomerase (253 aa).

Residue 9–11 (NWK) coordinates substrate. H95 (electrophile) is an active-site residue. The active-site Proton acceptor is the E167. Substrate is bound by residues G173, S213, and 234–235 (GG). S213 carries the post-translational modification Phosphoserine.

The protein belongs to the triosephosphate isomerase family. In terms of assembly, homodimer.

It localises to the cytoplasm. The catalysed reaction is D-glyceraldehyde 3-phosphate = dihydroxyacetone phosphate. The protein operates within carbohydrate biosynthesis; gluconeogenesis. Its pathway is carbohydrate degradation; glycolysis; D-glyceraldehyde 3-phosphate from glycerone phosphate: step 1/1. Involved in the gluconeogenesis. Catalyzes stereospecifically the conversion of dihydroxyacetone phosphate (DHAP) to D-glyceraldehyde-3-phosphate (G3P). This chain is Triosephosphate isomerase, found in Bacillus subtilis (strain 168).